The following is a 1210-amino-acid chain: MDKELPWLADNAQLELKYKKGKTPLSHRRWPGEPVSVITGSLIQTLGDELLQKAEKKKNIVWRYENFSLEWQSAITQAINLIGEHKPSIPARTMAALACIAQNDSQQLLDEIVQQEGLEYATEVVIARQFIARCYESDPLVVTLQYQDEDYGYGYRSETYNEFDLRLRKHLSLAEESCWQRCADKLIAALPGINKVRRPFIALILPEKPEIANELVGLECPRTHFHSKEWLKVVANDPTAVRKLEHYWSQDIFSDREASYMSHENHFGYAACAALLREQGLAAIPRLAMYAHKEDCGSLLVQINHPQVIRTLLLVADKNKPSLQRVAKYHKNFPHATLAALAELLALTEPPARPGYPIIEDKKLPAQQKARDEYWRTLLQTLMASQPQLAAEVMPWLSTQPQSVLKSYLSAPPKPVIDGTDNSNLPEILVSPPWRSKKKMTAPRLDLAPLELTPQVYWQPGEQERLAATEPARYFSTESLAQRMEQKSGRVVLQELGFGDDVWLFLNYILPGKLDAARNSLFVQWHYYQGRVEEILNGWNSPEAQLAEQALRSGHIEALINIWENDNYSHYRPEKSVWNLYLLAQLPREMALTFWLRINEKKHLFAGEDYFLSILGLDALPGLLLAFSHRPKETFPLILNFGATELALPVAHVWRRFAAQRDLARQWILQWPEHTASALIPLVFTKPSDNSEAALLALRLLYEQGHGELLQTVANRWQRTDVWSALEQLLKQGPMDIYPARIPKAPDFWHPQMWSRPRLITNNQTVTNDALEIIGEMLRFTQGGRFYSGLEQLKTFCQPQTLAAFAWDLFTAWQQAGAPAKDNWAFLALSLFGDESTARDLTTQILAWPQEGKSARAVSGLNILTLMNNDMALIQLHHISQRAKSRPLRDNAAEFLQVVAENRGLSQEELADRLVPTLGLDDPQALSFDFGPRQFTVRFDENLNPVIFDQQNVRQKSVPRLRADDDQLKAPEALARLKGLKKDATQVSKNLLPRLETALRTTRRWSLADFHSLFVNHPFTRLVTQRLIWGVYPANEPRCLLKAFRVAAEGEFCNAQDEPIDLPADALIGIAHPLEMTAEMRSEFAQLFADYEIMPPFRQLSRRTVLLTPDESTSNSLTRWEGKSATVGQLMGMRYKGWESGYEDAFVYNLGEYRLVLKFSPGFNHYNVDSKALMSFRSLRVYRDNKSVTFAELDVFDLSEALSAPDVIFH.

This sequence to E.coli molybdate metabolism regulator (MolR).

This is an uncharacterized protein from Escherichia coli (strain K12).